The chain runs to 206 residues: FMN-dependent NADH:quinone oxidoreductase 2 (206 aa).

Ser10 contributes to the FMN binding site.

Belongs to the azoreductase type 1 family. Homodimer. FMN serves as cofactor.

It catalyses the reaction 2 a quinone + NADH + H(+) = 2 a 1,4-benzosemiquinone + NAD(+). It carries out the reaction N,N-dimethyl-1,4-phenylenediamine + anthranilate + 2 NAD(+) = 2-(4-dimethylaminophenyl)diazenylbenzoate + 2 NADH + 2 H(+). Its function is as follows. Quinone reductase that provides resistance to thiol-specific stress caused by electrophilic quinones. In terms of biological role, also exhibits azoreductase activity. Catalyzes the reductive cleavage of the azo bond in aromatic azo compounds to the corresponding amines. The polypeptide is FMN-dependent NADH:quinone oxidoreductase 2 (Rhizobium etli (strain ATCC 51251 / DSM 11541 / JCM 21823 / NBRC 15573 / CFN 42)).